Reading from the N-terminus, the 907-residue chain is Translation initiation factor IF-2 (907 aa).

A disordered region spans residues 1-305; it reads MSEGNDQDQG…SLASVRRQRE (305 aa). The segment covering 62–80 has biased composition (gly residues); that stretch reads SGSGSSGGGRAGGRGGSGG. 2 stretches are compositionally biased toward basic and acidic residues: residues 93–114 and 122–158; these read RVLE…EQEK and EEAR…ERRA. The segment covering 211-230 has biased composition (low complexity); sequence PARPVTPSRPATPAATPQAP. Composition is skewed to basic and acidic residues over residues 240–249 and 271–280; these read RVGEAEDDRR and KGGDSRRSGR. The tr-type G domain maps to 406–576; that stretch reads PRPPVVTVMG…LLQAEMLDLR (171 aa). The G1 stretch occupies residues 415 to 422; the sequence is GHVDHGKT. 415–422 is a GTP binding site; that stretch reads GHVDHGKT. The segment at 440–444 is G2; sequence GITQH. Residues 462 to 465 form a G3 region; sequence DTPG. GTP-binding positions include 462-466 and 516-519; these read DTPGH and NKCD. The segment at 516–519 is G4; it reads NKCD. The tract at residues 552–554 is G5; that stretch reads SAL.

It belongs to the TRAFAC class translation factor GTPase superfamily. Classic translation factor GTPase family. IF-2 subfamily.

It localises to the cytoplasm. Its function is as follows. One of the essential components for the initiation of protein synthesis. Protects formylmethionyl-tRNA from spontaneous hydrolysis and promotes its binding to the 30S ribosomal subunits. Also involved in the hydrolysis of GTP during the formation of the 70S ribosomal complex. This is Translation initiation factor IF-2 from Gluconacetobacter diazotrophicus (strain ATCC 49037 / DSM 5601 / CCUG 37298 / CIP 103539 / LMG 7603 / PAl5).